A 765-amino-acid polypeptide reads, in one-letter code: 5-methyltetrahydropteroyltriglutamate--homocysteine methyltransferase 1 (765 aa).

2 residues coordinate 5-methyltetrahydropteroyltri-L-glutamate: Lys18 and Asn116. 437 to 439 (IGS) contacts L-homocysteine. L-methionine contacts are provided by residues 437–439 (IGS) and Glu490. Residues 521–522 (RC) and Trp567 each bind 5-methyltetrahydropteroyltri-L-glutamate. Residue Asp605 participates in L-homocysteine binding. Asp605 is an L-methionine binding site. Zn(2+) is bound by residues His647, Cys649, His658, Asp662, and Glu671. Residue His701 is the Proton donor of the active site. Cys733 is a binding site for Zn(2+).

The protein belongs to the vitamin-B12 independent methionine synthase family. The cofactor is Zn(2+). As to expression, expressed in leaves, stems, flowers, siliques and seeds.

The protein resides in the cytoplasm. Its subcellular location is the cytosol. It carries out the reaction 5-methyltetrahydropteroyltri-L-glutamate + L-homocysteine = tetrahydropteroyltri-L-glutamate + L-methionine. It functions in the pathway amino-acid biosynthesis; L-methionine biosynthesis via de novo pathway; L-methionine from L-homocysteine (MetE route): step 1/1. Catalyzes the transfer of a methyl group from 5-methyltetrahydrofolate to homocysteine resulting in methionine formation. The polypeptide is 5-methyltetrahydropteroyltriglutamate--homocysteine methyltransferase 1 (MS1) (Arabidopsis thaliana (Mouse-ear cress)).